Reading from the N-terminus, the 825-residue chain is Probable inorganic carbon transporter subunit DabA (825 aa).

Residues Cys-334, Asp-336, His-521, and Cys-536 each coordinate Zn(2+).

It belongs to the inorganic carbon transporter (TC 9.A.2) DabA family. As to quaternary structure, forms a complex with DabB. Zn(2+) is required as a cofactor.

It localises to the cell inner membrane. Functionally, part of an energy-coupled inorganic carbon pump. The protein is Probable inorganic carbon transporter subunit DabA of Acidithiobacillus ferrooxidans (strain ATCC 53993 / BNL-5-31) (Leptospirillum ferrooxidans (ATCC 53993)).